We begin with the raw amino-acid sequence, 183 residues long: Translation initiation factor IF-3 (183 aa).

The protein belongs to the IF-3 family. In terms of assembly, monomer.

The protein resides in the cytoplasm. IF-3 binds to the 30S ribosomal subunit and shifts the equilibrium between 70S ribosomes and their 50S and 30S subunits in favor of the free subunits, thus enhancing the availability of 30S subunits on which protein synthesis initiation begins. In Yersinia pseudotuberculosis serotype O:1b (strain IP 31758), this protein is Translation initiation factor IF-3.